A 179-amino-acid polypeptide reads, in one-letter code: Large ribosomal subunit protein uL6 (179 aa).

Belongs to the universal ribosomal protein uL6 family. In terms of assembly, part of the 50S ribosomal subunit.

Functionally, this protein binds to the 23S rRNA, and is important in its secondary structure. It is located near the subunit interface in the base of the L7/L12 stalk, and near the tRNA binding site of the peptidyltransferase center. The polypeptide is Large ribosomal subunit protein uL6 (Persephonella marina (strain DSM 14350 / EX-H1)).